Consider the following 126-residue polypeptide: Aspartate 1-decarboxylase (126 aa).

Ser25 (schiff-base intermediate with substrate; via pyruvic acid) is an active-site residue. Position 25 is a pyruvic acid (Ser) (Ser25). Position 57 (Thr57) interacts with substrate. The active-site Proton donor is Tyr58. Gly73–Ala75 contributes to the substrate binding site.

The protein belongs to the PanD family. In terms of assembly, heterooctamer of four alpha and four beta subunits. The cofactor is pyruvate. Post-translationally, is synthesized initially as an inactive proenzyme, which is activated by self-cleavage at a specific serine bond to produce a beta-subunit with a hydroxyl group at its C-terminus and an alpha-subunit with a pyruvoyl group at its N-terminus.

Its subcellular location is the cytoplasm. The catalysed reaction is L-aspartate + H(+) = beta-alanine + CO2. The protein operates within cofactor biosynthesis; (R)-pantothenate biosynthesis; beta-alanine from L-aspartate: step 1/1. Its function is as follows. Catalyzes the pyruvoyl-dependent decarboxylation of aspartate to produce beta-alanine. The sequence is that of Aspartate 1-decarboxylase from Acinetobacter baylyi (strain ATCC 33305 / BD413 / ADP1).